Reading from the N-terminus, the 1425-residue chain is Neuropathy target esterase sws (1425 aa).

At 1 to 34 (MDVLEMLRASASGSYNTIFSDAWCQYVSKQITAT) the chain is on the lumenal side. Residues 35–55 (VYMYFALVMMSLLFIAWFLYF) form a helical membrane-spanning segment. At 56–1425 (KRMARLRLRD…RSSPNNETKN (1370 aa)) the chain is on the cytoplasmic side. 174–301 (IFGHFEKPVF…IRVIQVIMIR (128 aa)) contributes to the a nucleoside 3',5'-cyclic phosphate binding site. Polar residues-rich tracts occupy residues 332–348 (TMSG…SRQA) and 357–366 (SQMNLMQSAV). The segment at 332 to 410 (TMSGPINSQT…NPDGSFHGTT (79 aa)) is disordered. Low complexity predominate over residues 367-381 (SGTGSSGVSVTVTRP). Residues Ser444 and Ser453 each carry the phosphoserine modification. A nucleoside 3',5'-cyclic phosphate-binding positions include 482 to 609 (ELGL…VVRR) and 598 to 727 (IVLD…HRFL). The 167-residue stretch at 952–1118 (LVLGGGGARG…VNNLPADVMH (167 aa)) folds into the PNPLA domain. A GXGXXG motif is present at residues 956-961 (GGGARG). Residues 983 to 987 (GVSIG) carry the GXSXG motif. Residue Ser985 is the Nucleophile of the active site. Asp1105 (proton acceptor) is an active-site residue. The DGA/G motif lies at 1105–1107 (DGG). Phosphoserine is present on Ser1160. A disordered region spans residues 1330-1425 (LERKTDKSTQ…RSSPNNETKN (96 aa)). Positions 1337–1347 (STQSSPPSNSR) are enriched in low complexity. A compositionally biased stretch (basic and acidic residues) spans 1348–1358 (SDMRGKEEARH). Over residues 1380-1403 (TKTQTGQEQELQQEQQDQGATAEQ) the composition is skewed to low complexity. Residues 1404 to 1416 (LVDKDKEENKENR) show a composition bias toward basic and acidic residues.

Belongs to the NTE family. Interacts with Pka-C3; interaction inhibits the catalytic function of Pka-C3 and the esterase activity of sws. Isoform A and isoform B are expressed in the entire brain cortex; cortical cell bodies of adult brain. Sws and Pka-C3 are colocalized in all neurons.

It localises to the endoplasmic reticulum membrane. It catalyses the reaction a 1-acyl-sn-glycero-3-phosphocholine + H2O = sn-glycerol 3-phosphocholine + a fatty acid + H(+). Its function is as follows. Phospholipase B that deacylates intracellular phosphatidylcholine (PtdCho), generating glycerophosphocholine (GroPtdCho). This deacylation occurs at both sn-2 and sn-1 positions of PtdCho. Its specific chemical modification by certain organophosphorus (OP) compounds leads to distal axonopathy. Plays a role in the signaling mechanism between neurons and glia that regulates glia wrapping during development of the adult brain. Essential for membrane lipid homeostasis and cell survival in both neurons and glia of the adult brain. This is Neuropathy target esterase sws (sws) from Drosophila melanogaster (Fruit fly).